The chain runs to 556 residues: Glutamine--tRNA ligase (556 aa).

The 'HIGH' region signature appears at 34–44 (PEPNGYLHIGH). ATP contacts are provided by residues 35–37 (EPN) and 41–47 (HIGHAKS). Residues aspartate 67 and tyrosine 212 each coordinate L-glutamine. ATP is bound by residues threonine 231, 261–262 (RL), and 269–271 (MSK). Positions 268-272 (VMSKR) match the 'KMSKS' region motif.

It belongs to the class-I aminoacyl-tRNA synthetase family. In terms of assembly, monomer.

It is found in the cytoplasm. It carries out the reaction tRNA(Gln) + L-glutamine + ATP = L-glutaminyl-tRNA(Gln) + AMP + diphosphate. This chain is Glutamine--tRNA ligase, found in Vibrio campbellii (strain ATCC BAA-1116).